Consider the following 402-residue polypeptide: MVMTQRIAVLGATGSIGDSTLAILAAQPQYYDVYALSGYHRLDKLLALCQQFAPKRVGVPTTAVDDFAKRLSAAGLDIEVVGGDAGLVDIATDSQTDTVVAAIVGAAGLPSTLAAARAGKRILLANKEALVMAGQVMINAVKTHHATLLPLDSEHNAIFQCLPFAIQQDNTQIHRSNHGVRKLWLTASGGPFLQQSFTQMQQASVAEAVKHPNWSMGQKISVDSATMMNKGLELIEACHLFDLPENKINVVIHPQSIIHSMVEYSDGSFLAQLGSPDMKTPIAHALSYPDRIDSGSQPLDLFALNGLEFIEPDLQKFACLRLAREAMQAGTHATIILNAANEIAVSAFLNNKIRLTDIADINEQALNEIQVPLLTETADIDEILAIDNLARQYTDKLVARLA.

NADPH contacts are provided by threonine 13, glycine 14, serine 15, isoleucine 16, and asparagine 126. Lysine 127 contacts 1-deoxy-D-xylulose 5-phosphate. Glutamate 128 serves as a coordination point for NADPH. Aspartate 152 serves as a coordination point for Mn(2+). 1-deoxy-D-xylulose 5-phosphate is bound by residues serine 153, glutamate 154, serine 188, and histidine 211. Glutamate 154 serves as a coordination point for Mn(2+). Glycine 217 is a binding site for NADPH. 1-deoxy-D-xylulose 5-phosphate is bound by residues serine 224, asparagine 229, lysine 230, and glutamate 233. Residue glutamate 233 participates in Mn(2+) binding.

This sequence belongs to the DXR family. Mg(2+) is required as a cofactor. Mn(2+) serves as cofactor.

It catalyses the reaction 2-C-methyl-D-erythritol 4-phosphate + NADP(+) = 1-deoxy-D-xylulose 5-phosphate + NADPH + H(+). Its pathway is isoprenoid biosynthesis; isopentenyl diphosphate biosynthesis via DXP pathway; isopentenyl diphosphate from 1-deoxy-D-xylulose 5-phosphate: step 1/6. Its function is as follows. Catalyzes the NADPH-dependent rearrangement and reduction of 1-deoxy-D-xylulose-5-phosphate (DXP) to 2-C-methyl-D-erythritol 4-phosphate (MEP). This chain is 1-deoxy-D-xylulose 5-phosphate reductoisomerase, found in Psychrobacter arcticus (strain DSM 17307 / VKM B-2377 / 273-4).